The primary structure comprises 278 residues: Shikimate dehydrogenase (NADP(+)) (278 aa).

Residues 19–21 (SRS) and threonine 66 each bind shikimate. Catalysis depends on lysine 70, which acts as the Proton acceptor. Aspartate 82 lines the NADP(+) pocket. Positions 91 and 107 each coordinate shikimate. NADP(+) contacts are provided by residues 133–137 (GAGGA), 157–162 (NRTRAK), and isoleucine 222. Tyrosine 224 serves as a coordination point for shikimate. An NADP(+)-binding site is contributed by glycine 245.

The protein belongs to the shikimate dehydrogenase family. Homodimer.

The enzyme catalyses shikimate + NADP(+) = 3-dehydroshikimate + NADPH + H(+). Its pathway is metabolic intermediate biosynthesis; chorismate biosynthesis; chorismate from D-erythrose 4-phosphate and phosphoenolpyruvate: step 4/7. Functionally, involved in the biosynthesis of the chorismate, which leads to the biosynthesis of aromatic amino acids. Catalyzes the reversible NADPH linked reduction of 3-dehydroshikimate (DHSA) to yield shikimate (SA). The polypeptide is Shikimate dehydrogenase (NADP(+)) (Dinoroseobacter shibae (strain DSM 16493 / NCIMB 14021 / DFL 12)).